Consider the following 189-residue polypeptide: GTPase HRas (189 aa).

M1 is subject to N-acetylmethionine; in GTPase HRas; alternate. Position 2 is an N-acetylthreonine; in GTPase HRas, N-terminally processed (T2). Residues 13–18 (GVGKSA), 29–35 (VDEYDPT), 59–60 (AG), 116–119 (NKCD), and 145–147 (SAK) contribute to the GTP site. Residues 32–40 (YDPTIEDSY) carry the Effector region motif. (Microbial infection) O-linked (Glc) threonine; by P.sordellii toxin TcsL glycosylation is present at T35. C118 is subject to S-nitrosocysteine. The interval 166 to 185 (HKLRKLNPPDESGPGCMSCK) is hypervariable region. K170 is covalently cross-linked (Glycyl lysine isopeptide (Lys-Gly) (interchain with G-Cter in ubiquitin)). A lipid anchor (S-palmitoyl cysteine) is attached at C181. The S-(15-deoxy-Delta12,14-prostaglandin J2-9-yl)cysteine; alternate moiety is linked to residue C184. The S-palmitoyl cysteine; alternate moiety is linked to residue C184. A Cysteine methyl ester modification is found at C186. C186 is lipidated: S-farnesyl cysteine. A propeptide spans 187–189 (VLS) (removed in mature form).

The protein belongs to the small GTPase superfamily. Ras family. In terms of assembly, in its GTP-bound form interacts with PLCE1. Interacts with TBC1D10C. Interacts with RGL3. Interacts with HSPD1. Found in a complex with at least BRAF, HRAS, MAP2K1, MAPK3 and RGS14. Interacts (active GTP-bound form) with RGS14 (via RBD 1 domain). Forms a signaling complex with RASGRP1 and DGKZ. Interacts with RASSF5. Interacts with PDE6D. Interacts with IKZF3. Interacts with RACK1. Interacts with PIK3CG; the interaction is required for membrane recruitment and beta-gamma G protein dimer-dependent activation of the PI3K gamma complex PIK3CG:PIK3R6. Interacts with RAPGEF2. Interacts (active GTP-bound form) with both SHOC2 and PP1c (all isoforms) to form a tertiary complex; SHOC2 and PP1c preferably bind M-Ras/MRAS, but they also bind K-Ras/KRAS, N-Ras/NRAS and H-Ras/HRAS. Interacts (GTP-bound form) with MAPKAP1/SIN1; inhibiting H-Ras/HRAS activity. In terms of processing, palmitoylated by the ZDHHC9-GOLGA7 complex. A continuous cycle of de- and re-palmitoylation regulates rapid exchange between plasma membrane and Golgi. S-nitrosylated; critical for redox regulation. Important for stimulating guanine nucleotide exchange. No structural perturbation on nitrosylation. Post-translationally, the covalent modification of cysteine by 15-deoxy-Delta12,14-prostaglandin-J2 is autocatalytic and reversible. It may occur as an alternative to other cysteine modifications, such as S-nitrosylation and S-palmitoylation. In terms of processing, acetylation at Lys-104 prevents interaction with guanine nucleotide exchange factors (GEFs). Fatty-acylated at Lys-170. Post-translationally, ubiquitinated by the BCR(LZTR1) E3 ubiquitin ligase complex at Lys-170 in a non-degradative manner, leading to inhibit Ras signaling by decreasing Ras association with membranes. In terms of processing, (Microbial infection) Glucosylated at Thr-35 by P.sordellii toxin TcsL. Monoglucosylation completely prevents the recognition of the downstream effector, blocking the GTPases in their inactive form, leading to inhibit Ras signaling. In terms of tissue distribution, widely expressed.

Its subcellular location is the cell membrane. It localises to the golgi apparatus. The protein localises to the golgi apparatus membrane. It is found in the nucleus. The protein resides in the cytoplasm. Its subcellular location is the perinuclear region. It carries out the reaction GTP + H2O = GDP + phosphate + H(+). Its activity is regulated as follows. Alternates between an inactive form bound to GDP and an active form bound to GTP. Activated by a guanine nucleotide-exchange factor (GEF) and inactivated by a GTPase-activating protein (GAP). Its function is as follows. Involved in the activation of Ras protein signal transduction. Ras proteins bind GDP/GTP and possess intrinsic GTPase activity. The chain is GTPase HRas (HRAS) from Homo sapiens (Human).